Here is a 435-residue protein sequence, read N- to C-terminus: Probable exopolygalacturonase B (435 aa).

The first 15 residues, 1–15, serve as a signal peptide directing secretion; sequence MKFFTAALFASAVSA. Residues asparagine 59, asparagine 184, and asparagine 224 are each glycosylated (N-linked (GlcNAc...) asparagine). The Proton donor role is filled by aspartate 254. A disulfide bond links cysteine 256 and cysteine 273. N-linked (GlcNAc...) asparagine glycans are attached at residues asparagine 262 and asparagine 274. The active site involves histidine 277. Residues asparagine 301, asparagine 328, asparagine 365, and asparagine 368 are each glycosylated (N-linked (GlcNAc...) asparagine). Cysteines 391 and 397 form a disulfide.

It belongs to the glycosyl hydrolase 28 family.

It is found in the secreted. The catalysed reaction is [(1-&gt;4)-alpha-D-galacturonosyl](n) + H2O = alpha-D-galacturonate + [(1-&gt;4)-alpha-D-galacturonosyl](n-1). Specific in hydrolyzing the terminal glycosidic bond of polygalacturonic acid and oligogalacturonates. The chain is Probable exopolygalacturonase B (pgxB) from Aspergillus terreus (strain NIH 2624 / FGSC A1156).